A 401-amino-acid chain; its full sequence is Probable 2,3-bisphosphoglycerate-independent phosphoglycerate mutase (401 aa).

The protein belongs to the BPG-independent phosphoglycerate mutase family. A-PGAM subfamily.

It carries out the reaction (2R)-2-phosphoglycerate = (2R)-3-phosphoglycerate. It participates in carbohydrate degradation; glycolysis; pyruvate from D-glyceraldehyde 3-phosphate: step 3/5. In terms of biological role, catalyzes the interconversion of 2-phosphoglycerate and 3-phosphoglycerate. This Thermotoga neapolitana (strain ATCC 49049 / DSM 4359 / NBRC 107923 / NS-E) protein is Probable 2,3-bisphosphoglycerate-independent phosphoglycerate mutase.